Reading from the N-terminus, the 625-residue chain is Alpha-amylase 1 (625 aa).

Residues 1–22 form the signal peptide; the sequence is MGFSKIALFSLFALFGLPTSLA. Cysteine 51 and cysteine 59 form a disulfide bridge. Substrate is bound at residue tryptophan 105. Asparagine 143 is a binding site for Ca(2+). Asparagine 153, asparagine 163, and asparagine 180 each carry an N-linked (GlcNAc...) asparagine glycan. Cysteine 172 and cysteine 187 form a disulfide bridge. Positions 185 and 198 each coordinate Ca(2+). Arginine 227 provides a ligand contact to substrate. Aspartate 229 serves as a coordination point for Ca(2+). Aspartate 229 (nucleophile) is an active-site residue. Residue 232–233 coordinates substrate; that stretch reads KQ. Asparagine 241 carries an N-linked (GlcNAc...) asparagine glycan. Glutamate 253 serves as a coordination point for Ca(2+). The active-site Proton donor is glutamate 253. N-linked (GlcNAc...) asparagine glycans are attached at residues asparagine 260 and asparagine 286. A disulfide bridge links cysteine 263 with cysteine 306. Position 322 (aspartate 322) interacts with substrate. Asparagine 331 carries an N-linked (GlcNAc...) asparagine glycan. Arginine 370 contributes to the substrate binding site. 2 N-linked (GlcNAc...) asparagine glycosylation sites follow: asparagine 440 and asparagine 461. Positions 526-579 are disordered; sequence SATSSSKSSSSSSSRSGSSSSSSSRSGSTSSSGSSHTITSTSQSVHTSGSSTST. Residue serine 603 is the site of GPI-anchor amidated serine attachment. A propeptide spans 604–625 (removed in mature form); that stretch reads SANAVRVSILGVAAFIAIVLFI.

The protein belongs to the glycosyl hydrolase 13 family. Ca(2+) serves as cofactor.

Its subcellular location is the cell membrane. It carries out the reaction Endohydrolysis of (1-&gt;4)-alpha-D-glucosidic linkages in polysaccharides containing three or more (1-&gt;4)-alpha-linked D-glucose units.. The polypeptide is Alpha-amylase 1 (aah1) (Schizosaccharomyces pombe (strain 972 / ATCC 24843) (Fission yeast)).